The primary structure comprises 306 residues: Glutathione transport system permease protein GsiC (306 aa).

Over 1-8 (MLNYVLKR) the chain is Cytoplasmic. A helical membrane pass occupies residues 9-29 (LLGLIPTLLIVAVLVFLFVHL). Residues 30-102 (LPGDPARLIA…SRFLPTLWLT (73 aa)) are Periplasmic-facing. Residues 95 to 292 (FLPTLWLTIT…LEFILINLVV (198 aa)) enclose the ABC transmembrane type-1 domain. The helical transmembrane segment at 103 to 123 (ITSMIWAVLFGMAIGIAAAVW) threads the bilayer. The Cytoplasmic portion of the chain corresponds to 124–134 (RNRWPDRLGMT). The helical transmembrane segment at 135–155 (LAVTGISFPAFALGMLLMQIF) threads the bilayer. The Periplasmic portion of the chain corresponds to 156 to 168 (SVDLGWLPTVGAD). The helical transmembrane segment at 169-189 (SWQHYILPSLTLGAAVASVMA) threads the bilayer. Over 190 to 228 (RFTRSSFVDVLSEDYMRTARAKGVSETWVVLKHGLRNAM) the chain is Cytoplasmic. A helical membrane pass occupies residues 229–249 (IPVVTMMGLQFGFLLGGSIVV). The Periplasmic segment spans residues 250-278 (EKVFNWPGLGRLLVDSVDMRDYPVIQAEV). A helical membrane pass occupies residues 279–299 (LLFSLEFILINLVVDVLYAAI). At 300–306 (NPAIRYK) the chain is on the cytoplasmic side.

Belongs to the binding-protein-dependent transport system permease family. The complex is composed of two ATP-binding proteins (GsiA), two transmembrane proteins (GsiC and GsiD) and a solute-binding protein (GsiB).

Its subcellular location is the cell inner membrane. In terms of biological role, part of the ABC transporter complex GsiABCD involved in glutathione import. Probably responsible for the translocation of the substrate across the membrane. The protein is Glutathione transport system permease protein GsiC of Salmonella typhimurium (strain LT2 / SGSC1412 / ATCC 700720).